We begin with the raw amino-acid sequence, 1107 residues long: RNA2 polyprotein (1107 aa).

A disordered region spans residues 553 to 584; the sequence is SRSMRFKSPSDLWSRPSVDGGSTSTQPPSKGS. Over residues 572–581 the composition is skewed to polar residues; that stretch reads GGSTSTQPPS.

The protein belongs to the nepoviruses RNA2 polyprotein family. Post-translationally, specific enzymatic cleavages in vivo by the P1 encoded 3C-like protease yield mature proteins.

Its subcellular location is the host cell junction. The protein resides in the host plasmodesma. It localises to the host cytoplasm. The protein localises to the host nucleus. It is found in the virion. Functionally, implicated in RNA2 replication. Could also be required for nematode transmission of the virus. Its function is as follows. Transports viral genome to neighboring plant cells directly through plasmosdesmata, without any budding. The movement protein allows efficient cell to cell propagation, by bypassing the host cell wall barrier. Acts by forming a tubular structure at the host plasmodesmata, enlarging it enough to allow free passage of virion capsids. In Raspberry ringspot virus (strain S) (RpRSV), this protein is RNA2 polyprotein.